A 293-amino-acid chain; its full sequence is Fructose-bisphosphate aldolase (293 aa).

S50 provides a ligand contact to D-glyceraldehyde 3-phosphate. The Proton donor role is filled by D85. The Zn(2+) site is built by H86, D106, E136, and H178. G179 lines the dihydroxyacetone phosphate pocket. Position 208 (H208) interacts with Zn(2+). Dihydroxyacetone phosphate is bound by residues 209 to 211 (GGS) and 230 to 233 (NVNT).

The protein belongs to the class II fructose-bisphosphate aldolase family. Zn(2+) is required as a cofactor.

The catalysed reaction is beta-D-fructose 1,6-bisphosphate = D-glyceraldehyde 3-phosphate + dihydroxyacetone phosphate. The protein operates within carbohydrate degradation; glycolysis; D-glyceraldehyde 3-phosphate and glycerone phosphate from D-glucose: step 4/4. Catalyzes the aldol condensation of dihydroxyacetone phosphate (DHAP or glycerone-phosphate) with glyceraldehyde 3-phosphate (G3P) to form fructose 1,6-bisphosphate (FBP) in gluconeogenesis and the reverse reaction in glycolysis. The protein is Fructose-bisphosphate aldolase (fba) of Streptococcus pneumoniae serotype 4 (strain ATCC BAA-334 / TIGR4).